We begin with the raw amino-acid sequence, 221 residues long: Iron-sulfur cluster repair protein YtfE (221 aa).

The protein belongs to the RIC family. YtfE subfamily. As to quaternary structure, homodimer.

Its subcellular location is the cytoplasm. In terms of biological role, di-iron-containing protein involved in the repair of iron-sulfur clusters damaged by oxidative and nitrosative stress conditions. This is Iron-sulfur cluster repair protein YtfE from Yersinia pseudotuberculosis serotype O:1b (strain IP 31758).